The chain runs to 38 residues: EVKYDPCFGHKIDRINHVSNLGCPSLRDPRPNAPSTSA.

A disulfide bridge connects residues Cys7 and Cys23. The segment at 19-38 (SNLGCPSLRDPRPNAPSTSA) is disordered.

The protein belongs to the natriuretic peptide family. Expressed by the venom gland.

The protein localises to the secreted. In terms of biological role, exhibits vasodilator, natriuretic and diuretic properties in animal models and human tissues. Acts by stimulating cGMP via the natriuretic peptide receptor 1 (NPR1). Is a poor agonist of the atrial natriuretic peptide receptor 2 (NPR2). Is not degraded by neutral endopeptidase (NEP/MME). Binds to atrial natriuretic peptide clearance receptor (NPR-C/NPR3), which may be responsible of the removal of DNP from the circulation. Increases calcium uptake and induces histamine release from rat peritoneal mast cells. Increases calcium-activated potassium (KCa) current in gastric antral circular smooth muscle cells by increasing cGMP production and activating inositol trisphosphate receptors (IP3Rs). In vivo, reduces both systolic and diastolic blood pressure with no effect on heart rate, when intravenously injected in conscious rabbits. This Dendroaspis angusticeps (Eastern green mamba) protein is Natriuretic peptide DNP.